We begin with the raw amino-acid sequence, 154 residues long: MKRIEAYTDGACSGNPGPGGWGAILRWNDNVKELKGGEADTTNNRMELMAAISALSALKEPCEVDLYTDSVYVRDGISGWIEGWKRNGWKTAAKKPVKNAELWQALDEARKPHKVNWHWVKGHAGHPENERADELAREGMEPFKYGGRKSLKVQ.

An RNase H type-1 domain is found at 1-141; that stretch reads MKRIEAYTDG…ADELAREGME (141 aa). The Mg(2+) site is built by Asp9, Glu47, Asp69, and Asp133.

The protein belongs to the RNase H family. Monomer. Mg(2+) is required as a cofactor.

It is found in the cytoplasm. It carries out the reaction Endonucleolytic cleavage to 5'-phosphomonoester.. In terms of biological role, endonuclease that specifically degrades the RNA of RNA-DNA hybrids. The protein is Ribonuclease H of Brucella anthropi (strain ATCC 49188 / DSM 6882 / CCUG 24695 / JCM 21032 / LMG 3331 / NBRC 15819 / NCTC 12168 / Alc 37) (Ochrobactrum anthropi).